Here is a 122-residue protein sequence, read N- to C-terminus: Small ribosomal subunit protein uS13 (122 aa).

A compositionally biased stretch (basic residues) spans 95–116 (GLPCRGQKTKTNARTRKGKKKT). The interval 95-122 (GLPCRGQKTKTNARTRKGKKKTVGAATK) is disordered.

It belongs to the universal ribosomal protein uS13 family. As to quaternary structure, part of the 30S ribosomal subunit. Forms a loose heterodimer with protein S19. Forms two bridges to the 50S subunit in the 70S ribosome.

Its function is as follows. Located at the top of the head of the 30S subunit, it contacts several helices of the 16S rRNA. In the 70S ribosome it contacts the 23S rRNA (bridge B1a) and protein L5 of the 50S subunit (bridge B1b), connecting the 2 subunits; these bridges are implicated in subunit movement. Contacts the tRNAs in the A and P-sites. In Aliarcobacter butzleri (strain RM4018) (Arcobacter butzleri), this protein is Small ribosomal subunit protein uS13.